A 256-amino-acid polypeptide reads, in one-letter code: Imidazole glycerol phosphate synthase subunit HisF (256 aa).

Active-site residues include Asp-11 and Asp-130.

This sequence belongs to the HisA/HisF family. As to quaternary structure, heterodimer of HisH and HisF.

The protein resides in the cytoplasm. It carries out the reaction 5-[(5-phospho-1-deoxy-D-ribulos-1-ylimino)methylamino]-1-(5-phospho-beta-D-ribosyl)imidazole-4-carboxamide + L-glutamine = D-erythro-1-(imidazol-4-yl)glycerol 3-phosphate + 5-amino-1-(5-phospho-beta-D-ribosyl)imidazole-4-carboxamide + L-glutamate + H(+). Its pathway is amino-acid biosynthesis; L-histidine biosynthesis; L-histidine from 5-phospho-alpha-D-ribose 1-diphosphate: step 5/9. Its function is as follows. IGPS catalyzes the conversion of PRFAR and glutamine to IGP, AICAR and glutamate. The HisF subunit catalyzes the cyclization activity that produces IGP and AICAR from PRFAR using the ammonia provided by the HisH subunit. This is Imidazole glycerol phosphate synthase subunit HisF from Prochlorococcus marinus (strain AS9601).